The sequence spans 44 residues: MTSNNPNQPVSYPIFTVRWLSVHALAVPTVFFIGAISAMQFIQR.

The helical transmembrane segment at 19-35 (WLSVHALAVPTVFFIGA) threads the bilayer. Position 23 (His23) interacts with heme.

This sequence belongs to the PsbE/PsbF family. As to quaternary structure, heterodimer of an alpha subunit and a beta subunit. PSII is composed of 1 copy each of membrane proteins PsbA, PsbB, PsbC, PsbD, PsbE, PsbF, PsbH, PsbI, PsbJ, PsbK, PsbL, PsbM, PsbT, PsbX, PsbY, PsbZ, Psb30/Ycf12, peripheral proteins PsbO, CyanoQ (PsbQ), PsbU, PsbV and a large number of cofactors. It forms dimeric complexes. Heme b is required as a cofactor.

The protein localises to the cellular thylakoid membrane. Functionally, this b-type cytochrome is tightly associated with the reaction center of photosystem II (PSII). PSII is a light-driven water:plastoquinone oxidoreductase that uses light energy to abstract electrons from H(2)O, generating O(2) and a proton gradient subsequently used for ATP formation. It consists of a core antenna complex that captures photons, and an electron transfer chain that converts photonic excitation into a charge separation. The protein is Cytochrome b559 subunit beta of Rippkaea orientalis (strain PCC 8801 / RF-1) (Cyanothece sp. (strain PCC 8801)).